Here is an 86-residue protein sequence, read N- to C-terminus: Cytochrome c oxidase subunit 6B1 (86 aa).

Residue A2 is modified to N-acetylalanine. In terms of domain architecture, CHCH spans 27–73; the sequence is TRNCWQNYLDFHRCQKAMTAKGGDISVCEWYQRVYQSLCPTSWVTDW. A Cx9C motif motif is present at residues 30-40; that stretch reads CWQNYLDFHRC. Cystine bridges form between C30–C65 and C40–C54. A Cx10C motif motif is present at residues 54-65; it reads CEWYQRVYQSLC.

It belongs to the cytochrome c oxidase subunit 6B family. Component of the cytochrome c oxidase (complex IV, CIV), a multisubunit enzyme composed of 14 subunits. The complex is composed of a catalytic core of 3 subunits MT-CO1, MT-CO2 and MT-CO3, encoded in the mitochondrial DNA, and 11 supernumerary subunits COX4I1 (or COX4I2), COX5A, COX5B, COX6A1 (or COX6A2), COX6B1 (or COX6B2), COX6C, COX7A2 (or COX7A1), COX7B, COX7C, COX8A and NDUFA4, which are encoded in the nuclear genome. The complex exists as a monomer or a dimer and forms supercomplexes (SCs) in the inner mitochondrial membrane with NADH-ubiquinone oxidoreductase (complex I, CI) and ubiquinol-cytochrome c oxidoreductase (cytochrome b-c1 complex, complex III, CIII), resulting in different assemblies (supercomplex SCI(1)III(2)IV(1) and megacomplex MCI(2)III(2)IV(2)).

It localises to the mitochondrion inner membrane. Its pathway is energy metabolism; oxidative phosphorylation. Functionally, component of the cytochrome c oxidase, the last enzyme in the mitochondrial electron transport chain which drives oxidative phosphorylation. The respiratory chain contains 3 multisubunit complexes succinate dehydrogenase (complex II, CII), ubiquinol-cytochrome c oxidoreductase (cytochrome b-c1 complex, complex III, CIII) and cytochrome c oxidase (complex IV, CIV), that cooperate to transfer electrons derived from NADH and succinate to molecular oxygen, creating an electrochemical gradient over the inner membrane that drives transmembrane transport and the ATP synthase. Cytochrome c oxidase is the component of the respiratory chain that catalyzes the reduction of oxygen to water. Electrons originating from reduced cytochrome c in the intermembrane space (IMS) are transferred via the dinuclear copper A center (CU(A)) of subunit 2 and heme A of subunit 1 to the active site in subunit 1, a binuclear center (BNC) formed by heme A3 and copper B (CU(B)). The BNC reduces molecular oxygen to 2 water molecules using 4 electrons from cytochrome c in the IMS and 4 protons from the mitochondrial matrix. The chain is Cytochrome c oxidase subunit 6B1 (COX6B1) from Homo sapiens (Human).